A 283-amino-acid polypeptide reads, in one-letter code: Diaminopimelate epimerase (283 aa).

Asparagine 14, glutamine 47, and asparagine 67 together coordinate substrate. The active-site Proton donor is the cysteine 76. Substrate is bound by residues 77-78, asparagine 164, asparagine 197, and 215-216; these read GN and ER. Catalysis depends on cysteine 224, which acts as the Proton acceptor. 225–226 is a binding site for substrate; that stretch reads GT.

This sequence belongs to the diaminopimelate epimerase family. Homodimer.

Its subcellular location is the cytoplasm. It catalyses the reaction (2S,6S)-2,6-diaminopimelate = meso-2,6-diaminopimelate. Its pathway is amino-acid biosynthesis; L-lysine biosynthesis via DAP pathway; DL-2,6-diaminopimelate from LL-2,6-diaminopimelate: step 1/1. Functionally, catalyzes the stereoinversion of LL-2,6-diaminopimelate (L,L-DAP) to meso-diaminopimelate (meso-DAP), a precursor of L-lysine and an essential component of the bacterial peptidoglycan. The chain is Diaminopimelate epimerase from Neisseria meningitidis serogroup A / serotype 4A (strain DSM 15465 / Z2491).